The following is a 375-amino-acid chain: Chaperone protein DnaJ (375 aa).

Residues 4-68 (DYYEILGVSR…ETRARYDRFG (65 aa)) form the J domain. The CR-type zinc-finger motif lies at 135 to 217 (GGEKEIRISH…CDGKGANQVT (83 aa)). Positions 148, 151, 165, 168, 191, 194, 205, and 208 each coordinate Zn(2+). 4 CXXCXGXG motif repeats span residues 148–155 (CEVCSGSG), 165–172 (CSTCSGSG), 191–198 (CPTCNGTG), and 205–212 (CDACDGKG).

This sequence belongs to the DnaJ family. Homodimer. Zn(2+) is required as a cofactor.

Its subcellular location is the cytoplasm. Functionally, participates actively in the response to hyperosmotic and heat shock by preventing the aggregation of stress-denatured proteins and by disaggregating proteins, also in an autonomous, DnaK-independent fashion. Unfolded proteins bind initially to DnaJ; upon interaction with the DnaJ-bound protein, DnaK hydrolyzes its bound ATP, resulting in the formation of a stable complex. GrpE releases ADP from DnaK; ATP binding to DnaK triggers the release of the substrate protein, thus completing the reaction cycle. Several rounds of ATP-dependent interactions between DnaJ, DnaK and GrpE are required for fully efficient folding. Also involved, together with DnaK and GrpE, in the DNA replication of plasmids through activation of initiation proteins. This chain is Chaperone protein DnaJ, found in Nostoc punctiforme (strain ATCC 29133 / PCC 73102).